The primary structure comprises 241 residues: Triosephosphate isomerase (241 aa).

9–11 (NWK) contacts substrate. His96 serves as the catalytic Electrophile. Glu165 functions as the Proton acceptor in the catalytic mechanism. Residues Gly171, Ser204, and 225-226 (GG) contribute to the substrate site.

The protein belongs to the triosephosphate isomerase family. As to quaternary structure, homodimer.

The protein resides in the cytoplasm. The catalysed reaction is D-glyceraldehyde 3-phosphate = dihydroxyacetone phosphate. It participates in carbohydrate biosynthesis; gluconeogenesis. Its pathway is carbohydrate degradation; glycolysis; D-glyceraldehyde 3-phosphate from glycerone phosphate: step 1/1. Involved in the gluconeogenesis. Catalyzes stereospecifically the conversion of dihydroxyacetone phosphate (DHAP) to D-glyceraldehyde-3-phosphate (G3P). In Acaryochloris marina (strain MBIC 11017), this protein is Triosephosphate isomerase.